Consider the following 400-residue polypeptide: S-adenosylmethionine synthase (400 aa).

His17 lines the ATP pocket. Asp19 provides a ligand contact to Mg(2+). Glu45 provides a ligand contact to K(+). Residues Glu58 and Gln101 each coordinate L-methionine. Positions 101 to 111 (QSADIAMGVDQ) are flexible loop. ATP is bound by residues 177–179 (DGK), 244–245 (RF), Asp253, 259–260 (RK), Ala276, and Lys280. Residue Asp253 participates in L-methionine binding. Position 284 (Lys284) interacts with L-methionine.

This sequence belongs to the AdoMet synthase family. Homotetramer; dimer of dimers. Mg(2+) is required as a cofactor. K(+) serves as cofactor.

The protein resides in the cytoplasm. It carries out the reaction L-methionine + ATP + H2O = S-adenosyl-L-methionine + phosphate + diphosphate. The protein operates within amino-acid biosynthesis; S-adenosyl-L-methionine biosynthesis; S-adenosyl-L-methionine from L-methionine: step 1/1. Its function is as follows. Catalyzes the formation of S-adenosylmethionine (AdoMet) from methionine and ATP. The overall synthetic reaction is composed of two sequential steps, AdoMet formation and the subsequent tripolyphosphate hydrolysis which occurs prior to release of AdoMet from the enzyme. The polypeptide is S-adenosylmethionine synthase (Bacillus subtilis (strain 168)).